We begin with the raw amino-acid sequence, 209 residues long: Probable GTP-binding protein EngB (209 aa).

The EngB-type G domain occupies 23 to 198 (NGAEIAFAGR…EKVVAGWLVP (176 aa)). Residues 31–38 (GRSNAGKS), 58–62 (GRTQL), 76–79 (DLPG), 143–146 (TKSD), and 177–179 (FSS) contribute to the GTP site. Residues S38 and T60 each coordinate Mg(2+).

The protein belongs to the TRAFAC class TrmE-Era-EngA-EngB-Septin-like GTPase superfamily. EngB GTPase family. Requires Mg(2+) as cofactor.

Necessary for normal cell division and for the maintenance of normal septation. The polypeptide is Probable GTP-binding protein EngB (Azoarcus sp. (strain BH72)).